The sequence spans 668 residues: Metastasis-associated protein MTA2 (668 aa).

One can recognise a BAH domain in the interval Met-1 to Gln-144. Phosphoserine occurs at positions 52 and 54. In terms of domain architecture, ELM2 spans Gly-145 to Gly-256. Residue Lys-152 is modified to N6-acetyllysine. One can recognise an SANT domain in the interval Asp-263–Arg-315. A GATA-type; atypical zinc finger spans residues Cys-367–Cys-394. The interval Gly-412–Tyr-437 is disordered. Ser-433 and Ser-435 each carry phosphoserine. Lys-460 carries the post-translational modification N6-acetyllysine. Residue Lys-492 forms a Glycyl lysine isopeptide (Lys-Gly) (interchain with G-Cter in SUMO2 and SUMO3); alternate linkage. A Glycyl lysine isopeptide (Lys-Gly) (interchain with G-Cter in SUMO2); alternate cross-link involves residue Lys-492. A Glycyl lysine isopeptide (Lys-Gly) (interchain with G-Cter in SUMO2) cross-link involves residue Lys-508. N6-acetyllysine is present on residues Lys-522 and Lys-531. Thr-534 is modified (phosphothreonine). Glycyl lysine isopeptide (Lys-Gly) (interchain with G-Cter in SUMO2) cross-links involve residues Lys-559 and Lys-595. Disordered regions lie at residues Ala-580–Ala-599 and Pro-647–Asp-668.

Belongs to the metastasis-associated protein family. As to quaternary structure, component of the nucleosome remodeling and deacetylase (NuRD) repressor complex, composed of core proteins MTA1, MTA2, MTA3, RBBP4, RBBP7, HDAC1, HDAC2, MBD2, MBD3, and peripherally associated proteins CDK2AP1, CDK2AP2, GATAD2A, GATAD2B, CHD3, CHD4 and CHD5. The exact stoichiometry of the NuRD complex is unknown, and some subunits such as MBD2 and MBD3, GATAD2A and GATAD2B, and CHD3, CHD4 and CHD5 define mutually exclusive NuRD complexes. Interacts with CHD3. Interacts with CHD4. Interacts with GATAD2A. Interacts with HDAC7. Interacts with MBD3. Interacts with p53/TP53. Interacts with MINT. Interacts with PIMREG. Interacts with NACC2. Interacts with ERCC6. Interacts with PWWP2B. Interacts with transcription factor BCL11A.

The protein localises to the nucleus. Its function is as follows. May function as a transcriptional coregulator. Acts as a component of the histone deacetylase NuRD complex which participates in the remodeling of chromatin. This is Metastasis-associated protein MTA2 (Mta2) from Mus musculus (Mouse).